The chain runs to 431 residues: uncharacterized protein (431 aa).

11 helical membrane passes run 33–53 (VARV…VIYL), 63–83 (FSVF…ANGL), 111–131 (VSGM…PLWS), 143–163 (VALL…LGML), 197–217 (LVGF…MLMT), 241–261 (AHSI…PVLL), 273–293 (GVVI…LTAM), 318–338 (LIGG…PWIM), 358–378 (AAAV…AAAL), 383–403 (SLGW…PLSL), and 407–427 (TVVA…VALA).

This sequence to M.tuberculosis Rv1510 and Rv3630.

The protein localises to the cell membrane. This is an uncharacterized protein from Mycobacterium bovis (strain ATCC BAA-935 / AF2122/97).